We begin with the raw amino-acid sequence, 933 residues long: Progesterone receptor (933 aa).

The interval 1–164 (MTELKAKGPR…PATQGVLSPL (164 aa)) is AF3; mediates transcriptional activation. The disordered stretch occupies residues 1 to 256 (MTELKAKGPR…AAAGGGAAAV (256 aa)). Positions 1–566 (MTELKAKGPR…YSFESLPQKI (566 aa)) are modulating, Pro-Rich. A Phosphoserine modification is found at S20. The short motif at 55 to 59 (LDGLL) is the LXXL motif 1 element. S81 carries the phosphoserine modification. Positions 115–119 (LDTLL) match the LXXL motif 2 motif. Phosphoserine occurs at positions 130 and 162. Residues 165–305 (MSRSGCKAGD…LATTMMDFIH (141 aa)) are mediates transcriptional transrepression. The Nuclear localization signal motif lies at 183–187 (KVLPR). Phosphoserine occurs at positions 190 and 213. Residues 220-231 (EVEEEDGSESEE) are compositionally biased toward acidic residues. A compositionally biased stretch (low complexity) spans 232–246 (SAGPLLKGKPRALGG). S294 carries the phosphoserine; by MAPK1 modification. Residues 335 to 356 (AXSAFAPPRSSPSASSTPVAVG) show a composition bias toward low complexity. The interval 335–378 (AXSAFAPPRSSPSASSTPVAVGDFPDCAYPPDAEPKDDAYPLYS) is disordered. S345 bears the Phosphoserine; by MAPK mark. K388 is covalently cross-linked (Glycyl lysine isopeptide (Lys-Gly) (interchain with G-Cter in SUMO); alternate). K388 is covalently cross-linked (Glycyl lysine isopeptide (Lys-Gly) (interchain with G-Cter in ubiquitin); alternate). S400 is modified (phosphoserine; by CDK2). Residues 415–452 (PDFPLGPPPPLPPRAPPSRPGEAAVTAAPASASVSSAS) are disordered. The span at 418–433 (PLGPPPPLPPRAPPSR) shows a compositional bias: pro residues. Low complexity predominate over residues 434–452 (PGEAAVTAAPASASVSSAS). Residues 456–546 (STLECILYKA…VYPPYLNYLR (91 aa)) form an AF1; mediates transcriptional activation region. A Glycyl lysine isopeptide (Lys-Gly) (interchain with G-Cter in SUMO) cross-link involves residue K531. NR C4-type zinc fingers lie at residues 567–587 (CLIC…CGSC) and 603–627 (CAGR…LRKC). The segment at residues 567–639 (CLICGDEASG…AGMVLGGRKF (73 aa)) is a DNA-binding region (nuclear receptor). A Phosphoserine modification is found at S676. The 235-residue stretch at 679-913 (QDIQLIPPLI…EFPEMMSEVI (235 aa)) folds into the NR LBD domain. The interval 687-933 (LINLLMSIEP…MVKPLLFHKK (247 aa)) is AF2; mediates transcriptional activation. R766 lines the progesterone pocket.

This sequence belongs to the nuclear hormone receptor family. As to quaternary structure, interacts with SMARD1 and UNC45A. Interacts with CUEDC2; the interaction promotes ubiquitination, decreases sumoylation, and represses transcriptional activity. Interacts with PIAS3; the interaction promotes sumoylation of PR in a hormone-dependent manner, inhibits DNA-binding, and alters nuclear export. Interacts with SP1; the interaction requires ligand-induced phosphorylation on Ser-345 by ERK1/2-MAPK. Interacts with PRMT2. Interacts with NCOA2 and NCOA1. Interacts with KLF9. Interacts with GTF2B. In terms of processing, phosphorylated on multiple serine sites. Several of these sites are hormone-dependent. Phosphorylation on Ser-294 is highly hormone-dependent and modulates ubiquitination and sumoylation on Lys-388. Phosphorylation on Ser-102 and Ser-345 requires induction by hormone. Basal phosphorylation on Ser-81, Ser-162, Ser-190 and Ser-400 is increased in response to progesterone and can be phosphorylated in vitro by the CDK2-A1 complex. Increased levels of phosphorylation on Ser-400 also in the presence of EGF, heregulin, IGF, PMA and FBS. Phosphorylation at this site by CDK2 is ligand-independent, and increases nuclear translocation and transcriptional activity. Phosphorylation at Ser-162 and Ser-294, but not at Ser-190, is impaired during the G(2)/M phase of the cell cycle. Phosphorylation on Ser-345 by ERK1/2 MAPK is required for interaction with SP1. Post-translationally, sumoylation is hormone-dependent and represses transcriptional activity. Sumoylation on all three sites is enhanced by PIAS3. Desumoylated by SENP1. Sumoylation on Lys-388, the main site of sumoylation, is repressed by ubiquitination on the same site, and modulated by phosphorylation at Ser-294. Ubiquitination is hormone-dependent and represses sumoylation on the same site. Promoted by MAPK-mediated phosphorylation on Ser-294. Ubiquitinated by UBR5, leading to its degradation: UBR5 specifically recognizes and binds ligand-bound PGR when it is not associated with coactivators (NCOAs). In presence of NCOAs, the UBR5-degron is not accessible, preventing its ubiquitination and degradation. In terms of processing, palmitoylated by ZDHHC7 and ZDHHC21. Palmitoylation is required for plasma membrane targeting and for rapid intracellular signaling via ERK and AKT kinases and cAMP generation.

It is found in the nucleus. The protein localises to the cytoplasm. Functionally, the steroid hormones and their receptors are involved in the regulation of eukaryotic gene expression and affect cellular proliferation and differentiation in target tissues. Transcriptional activator of several progesteron-dependent promoters in a variety of cell types. Involved in activation of SRC-dependent MAPK signaling on hormone stimulation. This is Progesterone receptor (PGR) from Pan troglodytes (Chimpanzee).